The chain runs to 413 residues: 4-hydroxy-3-methylbut-2-en-1-yl diphosphate synthase (flavodoxin) (413 aa).

The [4Fe-4S] cluster site is built by Cys-298, Cys-301, Cys-344, and Glu-351.

This sequence belongs to the IspG family. It depends on [4Fe-4S] cluster as a cofactor.

The catalysed reaction is (2E)-4-hydroxy-3-methylbut-2-enyl diphosphate + oxidized [flavodoxin] + H2O + 2 H(+) = 2-C-methyl-D-erythritol 2,4-cyclic diphosphate + reduced [flavodoxin]. It functions in the pathway isoprenoid biosynthesis; isopentenyl diphosphate biosynthesis via DXP pathway; isopentenyl diphosphate from 1-deoxy-D-xylulose 5-phosphate: step 5/6. In terms of biological role, converts 2C-methyl-D-erythritol 2,4-cyclodiphosphate (ME-2,4cPP) into 1-hydroxy-2-methyl-2-(E)-butenyl 4-diphosphate. The chain is 4-hydroxy-3-methylbut-2-en-1-yl diphosphate synthase (flavodoxin) from Koribacter versatilis (strain Ellin345).